The following is a 1390-amino-acid chain: DNA-directed RNA polymerase subunit beta (1390 aa).

The disordered stretch occupies residues 556 to 576 (KLADQDAENDPDSDLGTKSSN).

It belongs to the RNA polymerase beta chain family. The RNAP catalytic core consists of 2 alpha, 1 beta, 1 beta' and 1 omega subunit. When a sigma factor is associated with the core the holoenzyme is formed, which can initiate transcription.

It catalyses the reaction RNA(n) + a ribonucleoside 5'-triphosphate = RNA(n+1) + diphosphate. In terms of biological role, DNA-dependent RNA polymerase catalyzes the transcription of DNA into RNA using the four ribonucleoside triphosphates as substrates. This chain is DNA-directed RNA polymerase subunit beta, found in Mycoplasmoides gallisepticum (strain R(low / passage 15 / clone 2)) (Mycoplasma gallisepticum).